A 108-amino-acid polypeptide reads, in one-letter code: Insertion element IS629 uncharacterized 12 kDa protein S4062 (108 aa).

Belongs to the transposase 8 family.

This chain is Insertion element IS629 uncharacterized 12 kDa protein S4062, found in Shigella flexneri.